The primary structure comprises 146 residues: 3-dehydroquinate dehydratase (146 aa).

The Proton acceptor role is filled by Tyr-24. Residues Asn-73, His-79, and Asp-86 each contribute to the substrate site. His-99 (proton donor) is an active-site residue. Residues 100–101 (LS) and Arg-110 each bind substrate.

The protein belongs to the type-II 3-dehydroquinase family. In terms of assembly, homododecamer.

The catalysed reaction is 3-dehydroquinate = 3-dehydroshikimate + H2O. The protein operates within metabolic intermediate biosynthesis; chorismate biosynthesis; chorismate from D-erythrose 4-phosphate and phosphoenolpyruvate: step 3/7. In terms of biological role, catalyzes a trans-dehydration via an enolate intermediate. This Shewanella baltica (strain OS223) protein is 3-dehydroquinate dehydratase.